A 439-amino-acid polypeptide reads, in one-letter code: Methylenetetrahydrofolate--tRNA-(uracil-5-)-methyltransferase TrmFO (439 aa).

8-13 (GAGLAG) provides a ligand contact to FAD.

The protein belongs to the MnmG family. TrmFO subfamily. The cofactor is FAD.

The protein resides in the cytoplasm. The catalysed reaction is uridine(54) in tRNA + (6R)-5,10-methylene-5,6,7,8-tetrahydrofolate + NADH + H(+) = 5-methyluridine(54) in tRNA + (6S)-5,6,7,8-tetrahydrofolate + NAD(+). The enzyme catalyses uridine(54) in tRNA + (6R)-5,10-methylene-5,6,7,8-tetrahydrofolate + NADPH + H(+) = 5-methyluridine(54) in tRNA + (6S)-5,6,7,8-tetrahydrofolate + NADP(+). Its function is as follows. Catalyzes the folate-dependent formation of 5-methyl-uridine at position 54 (M-5-U54) in all tRNAs. The polypeptide is Methylenetetrahydrofolate--tRNA-(uracil-5-)-methyltransferase TrmFO (Magnetococcus marinus (strain ATCC BAA-1437 / JCM 17883 / MC-1)).